Reading from the N-terminus, the 73-residue chain is Large ribosomal subunit protein eL20 (73 aa).

This sequence belongs to the eukaryotic ribosomal protein eL20 family. As to quaternary structure, part of the 50S ribosomal subunit. Binds 23S rRNA.

This chain is Large ribosomal subunit protein eL20, found in Methanococcus aeolicus (strain ATCC BAA-1280 / DSM 17508 / OCM 812 / Nankai-3).